The sequence spans 714 residues: Transcription activator of gluconeogenesis UREG_00958 (714 aa).

A disordered region spans residues 1–71 (MTSNARNGPL…NAKDPLRPRR (71 aa)). Positions 38 to 62 (ESQTQVENSSTKQPNGQTKPMSASN) are enriched in polar residues. A DNA-binding region (zn(2)-C6 fungal-type) is located at residues 78 to 106 (CFACQRAHLTCGDERPCQRCIKRGIQNSC). Disordered stretches follow at residues 176 to 228 (SLSQ…NASG), 274 to 312 (GAGD…TAQP), and 539 to 567 (NTGG…VNPS). Residues 191 to 228 (FPSQSPVSPTFSITANSATSGNQNMPSSLPASNGNASG) are compositionally biased toward polar residues. Positions 545–555 (GSTSGTSSRGS) are enriched in low complexity.

The protein belongs to the ERT1/acuK family.

The protein resides in the nucleus. Its function is as follows. Transcription factor which regulates nonfermentable carbon utilization. Activator of gluconeogenetic genes. In Uncinocarpus reesii (strain UAMH 1704), this protein is Transcription activator of gluconeogenesis UREG_00958.